The primary structure comprises 423 residues: Dihydrolipoyllysine-residue succinyltransferase component of 2-oxoglutarate dehydrogenase complex (423 aa).

In terms of domain architecture, Lipoyl-binding spans 1-76 (MPEVKVPELA…EVGQAIAVIG (76 aa)). K42 carries the N6-lipoyllysine modification. Residues 76–185 (GEGSGNASKE…APAKEEKKYN (110 aa)) form a disordered region. Positions 80–96 (GNASKENSNDNTPQQND) are enriched in polar residues. The segment covering 99-115 (TNNKKEETTNKSADKAE) has biased composition (basic and acidic residues). Over residues 116–131 (VNQTNDDNQQRVNATP) the composition is skewed to polar residues. Residues 128–164 (NATPSARRYARENGVNLAEVSPKTNDVVRKEDIDKKQ) form the Peripheral subunit-binding (PSBD) domain. Basic and acidic residues predominate over residues 153–164 (DVVRKEDIDKKQ). The span at 165–177 (QAPASTQTTQQAP) shows a compositional bias: low complexity. Catalysis depends on residues H394 and D398.

The protein belongs to the 2-oxoacid dehydrogenase family. In terms of assembly, forms a 24-polypeptide structural core with octahedral symmetry. Part of the 2-oxoglutarate dehydrogenase (OGDH) complex composed of E1 (2-oxoglutarate dehydrogenase), E2 (dihydrolipoamide succinyltransferase) and E3 (dihydrolipoamide dehydrogenase); the complex contains multiple copies of the three enzymatic components (E1, E2 and E3). The cofactor is (R)-lipoate.

It carries out the reaction N(6)-[(R)-dihydrolipoyl]-L-lysyl-[protein] + succinyl-CoA = N(6)-[(R)-S(8)-succinyldihydrolipoyl]-L-lysyl-[protein] + CoA. It functions in the pathway amino-acid degradation; L-lysine degradation via saccharopine pathway; glutaryl-CoA from L-lysine: step 6/6. E2 component of the 2-oxoglutarate dehydrogenase (OGDH) complex which catalyzes the second step in the conversion of 2-oxoglutarate to succinyl-CoA and CO(2). The protein is Dihydrolipoyllysine-residue succinyltransferase component of 2-oxoglutarate dehydrogenase complex (odhB) of Staphylococcus aureus (strain MRSA252).